A 91-amino-acid chain; its full sequence is Large ribosomal subunit protein eL34 (91 aa).

Belongs to the eukaryotic ribosomal protein eL34 family.

The polypeptide is Large ribosomal subunit protein eL34 (Thermofilum pendens (strain DSM 2475 / Hrk 5)).